We begin with the raw amino-acid sequence, 402 residues long: Phytoene synthase 2, chloroplastic (402 aa).

Residues 1 to 54 (MAAGSSAVWAAQHPACSGGKFHHLSPSHSHCRPRRALQTPPALPARRSGASPPR) constitute a chloroplast transit peptide. A compositionally biased stretch (basic residues) spans 20-35 (KFHHLSPSHSHCRPRR). Positions 20–54 (KFHHLSPSHSHCRPRRALQTPPALPARRSGASPPR) are disordered. Residues 44-54 (PARRSGASPPR) show a composition bias toward low complexity.

It belongs to the phytoene/squalene synthase family. In terms of tissue distribution, expressed in leaves and endosperm.

The protein resides in the plastid. Its subcellular location is the chloroplast. The protein localises to the plastoglobule. The enzyme catalyses 2 (2E,6E,10E)-geranylgeranyl diphosphate = 15-cis-phytoene + 2 diphosphate. Catalyzes the conversion of geranylgeranyl diphosphate to phytoene. Mediates the first committed step in carotenoid biosynthesis. In Zea mays (Maize), this protein is Phytoene synthase 2, chloroplastic.